The sequence spans 395 residues: Thyrotropin-releasing hormone receptor (395 aa).

Residues Met1–Thr30 are Extracellular-facing. Residues Asn3 and Asn10 are each glycosylated (N-linked (GlcNAc...) asparagine). The chain crosses the membrane as a helical span at residues Ile31–Leu53. The Cytoplasmic portion of the chain corresponds to Arg54–Asn63. The helical transmembrane segment at Cys64 to Ile85 threads the bilayer. The Extracellular portion of the chain corresponds to Thr86 to Leu101. Residues Cys100 and Cys181 are joined by a disulfide bond. The chain crosses the membrane as a helical span at residues Cys102–Ile123. At Glu124–Lys146 the chain is on the cytoplasmic side. A helical transmembrane segment spans residues Ile147–Ile170. Over Ala171–Met195 the chain is Extracellular. Residues Met196–Ala217 traverse the membrane as a helical segment. The Cytoplasmic segment spans residues Arg218–Lys268. A helical transmembrane segment spans residues Met269 to Val290. At Asn291–Phe298 the chain is on the extracellular side. A helical membrane pass occupies residues Gln299–Ile321. At Tyr322 to Ala395 the chain is on the cytoplasmic side.

This sequence belongs to the G-protein coupled receptor 1 family.

The protein resides in the cell membrane. Receptor for thyrotropin-releasing hormone (TRH). Upon ligand binding, this G-protein-coupled receptor triggers activation of the phosphatidylinositol (IP3)-calcium-protein kinase C (PKC) pathway. In Gallus gallus (Chicken), this protein is Thyrotropin-releasing hormone receptor (TRHR).